A 481-amino-acid polypeptide reads, in one-letter code: 2-succinylbenzoate--CoA ligase (481 aa).

This sequence belongs to the ATP-dependent AMP-binding enzyme family. MenE subfamily.

It catalyses the reaction 2-succinylbenzoate + ATP + CoA = 2-succinylbenzoyl-CoA + AMP + diphosphate. It participates in quinol/quinone metabolism; 1,4-dihydroxy-2-naphthoate biosynthesis; 1,4-dihydroxy-2-naphthoate from chorismate: step 5/7. It functions in the pathway quinol/quinone metabolism; menaquinone biosynthesis. Functionally, converts 2-succinylbenzoate (OSB) to 2-succinylbenzoyl-CoA (OSB-CoA). The sequence is that of 2-succinylbenzoate--CoA ligase from Bacillus cereus (strain ATCC 10987 / NRS 248).